A 730-amino-acid chain; its full sequence is Guanyl-specific ribonuclease pgl-1 (730 aa).

An involved in dimerization region spans residues 205–447 (KQLMLDGPKS…VTRIVESLEK (243 aa)). Histidine 437 serves as the catalytic Proton acceptor. 2 stretches are compositionally biased toward polar residues: residues 452-472 (DTPS…QDSA) and 568-595 (DANQ…SPTK). Disordered regions lie at residues 452–475 (DTPS…AYTK), 567–639 (SDAN…TPMP), and 686–730 (GGRG…RGGF). The segment at 674 to 730 (GGGRGGYGGGDRGGRGGYGGDRGGRGGYGGGDRGGRGGYGGDRGRGGYGGRGGRGGF) is RNA-binding RGG-box.

As to quaternary structure, homodimer. Interacts with pgl-2 and pgl-3; this association is not required for P-granule localization of either pgl-2 or pgl-3. Interacts with ife-1. Interacts with prmt-1; the interaction is direct. Interacts with nmad-1. Interacts with P granule components meg-1, meg-3 and meg-4. It depends on Does not require metal ions for catalytic activity. as a cofactor. In terms of processing, methylated at arginine residues in the RNA-binding RGG-box by prmt-1. Methylation promotes P-granule degradation by autophagy. In terms of tissue distribution, expressed in the germline. Expressed in most somatic cells.

The protein localises to the cytoplasmic granule. The enzyme catalyses [RNA] containing guanosine + H2O = an [RNA fragment]-3'-guanosine-3'-phosphate + a 5'-hydroxy-ribonucleotide-3'-[RNA fragment].. Not inhibited by RNase inhibitor RNasin. Functionally, guanyl-specific endoribonuclease which cleaves the phosphodiester bond in single-stranded RNA between the 3'-guanylic residue and the 5'-OH residue of adjacent nucleotide, resulting in the formation of a corresponding 2',3'-cyclic phosphate intermediate. Together with the P-granule component pgl-3, is involved in the formation of P-granules. Together with pgl-3, probably recruits other granule components such as pos-1, mex-3 and glh-1 to P-granules. In addition, may act redundantly with pgl-3 to protect germ cells from excessive germline apoptosis during normal oogenesis and development of the two gonadal arms. This may in part be through regulating the localization of sir-2.1 which is involved in germ cell apoptosis. May protect somatic cells from excessive apoptosis during normal development. Essential role in male and female postembryonic germline development; maternally provided protein maintains a population of proliferating germ cells and zygotic expression is required for correct oogenesis. The protein is Guanyl-specific ribonuclease pgl-1 of Caenorhabditis elegans.